A 132-amino-acid polypeptide reads, in one-letter code: Small ribosomal subunit protein uS8c (132 aa).

It belongs to the universal ribosomal protein uS8 family. In terms of assembly, part of the 30S ribosomal subunit.

The protein localises to the plastid. It localises to the chloroplast. In terms of biological role, one of the primary rRNA binding proteins, it binds directly to 16S rRNA central domain where it helps coordinate assembly of the platform of the 30S subunit. The chain is Small ribosomal subunit protein uS8c (rps8) from Rhodomonas salina (Cryptomonas salina).